The primary structure comprises 414 residues: Carboxyl-terminal-processing protease (414 aa).

The signal sequence occupies residues 1–29 (MLRKRLQAGLCSLLLVLVLVFGPMERAIA). Positions 100–184 (YRSLKVSTSG…STVSLTVKSP (85 aa)) constitute a PDZ domain. Active-site charge relay system residues include Ser310, Asp321, and Lys335.

This sequence belongs to the peptidase S41A family.

It localises to the cellular thylakoid lumen. It catalyses the reaction The enzyme shows specific recognition of a C-terminal tripeptide, Xaa-Yaa-Zaa, in which Xaa is preferably Ala or Leu, Yaa is preferably Ala or Tyr, and Zaa is preferably Ala, but then cleaves at a variable distance from the C-terminus. A typical cleavage is -Ala-Ala-|-Arg-Ala-Ala-Lys-Glu-Asn-Tyr-Ala-Leu-Ala-Ala.. Cleavage of the 16 C-terminal residues from the D1 precursor of photosystem II (PSII). This proteolytic processing is necessary to allow the light-driven assembly of the oxygen-evolving cluster (a tetranuclear manganese), which is responsible for photosynthetic water oxidation. This Picosynechococcus sp. (strain ATCC 27264 / PCC 7002 / PR-6) (Agmenellum quadruplicatum) protein is Carboxyl-terminal-processing protease (ctpA).